The following is a 591-amino-acid chain: Aspartate--tRNA ligase (591 aa).

An L-aspartate-binding site is contributed by Glu-171. Positions 195–198 (QLFK) are aspartate. Residue Arg-217 participates in L-aspartate binding. Residues 217-219 (RDE) and Gln-226 contribute to the ATP site. L-aspartate is bound at residue His-448. Position 482 (Glu-482) interacts with ATP. L-aspartate is bound at residue Arg-489. An ATP-binding site is contributed by 534–537 (GLDR).

This sequence belongs to the class-II aminoacyl-tRNA synthetase family. Type 1 subfamily. As to quaternary structure, homodimer.

It is found in the cytoplasm. It carries out the reaction tRNA(Asp) + L-aspartate + ATP = L-aspartyl-tRNA(Asp) + AMP + diphosphate. Functionally, catalyzes the attachment of L-aspartate to tRNA(Asp) in a two-step reaction: L-aspartate is first activated by ATP to form Asp-AMP and then transferred to the acceptor end of tRNA(Asp). This chain is Aspartate--tRNA ligase, found in Edwardsiella ictaluri (strain 93-146).